Here is a 386-residue protein sequence, read N- to C-terminus: PqqA peptide cyclase (386 aa).

The 220-residue stretch at 9 to 228 (SKPPLWLLAE…RQYIDQHHLK (220 aa)) folds into the Radical SAM core domain. The [4Fe-4S] cluster site is built by C23, C27, and C30.

It belongs to the radical SAM superfamily. PqqE family. Interacts with PqqD. The interaction is necessary for activity of PqqE. The cofactor is [4Fe-4S] cluster.

It catalyses the reaction [PQQ precursor protein] + S-adenosyl-L-methionine = E-Y cross-linked-[PQQ precursor protein] + 5'-deoxyadenosine + L-methionine + H(+). The protein operates within cofactor biosynthesis; pyrroloquinoline quinone biosynthesis. Functionally, catalyzes the cross-linking of a glutamate residue and a tyrosine residue in the PqqA protein as part of the biosynthesis of pyrroloquinoline quinone (PQQ). This is PqqA peptide cyclase from Acinetobacter baylyi (strain ATCC 33305 / BD413 / ADP1).